We begin with the raw amino-acid sequence, 162 residues long: uncharacterized protein (162 aa).

This is an uncharacterized protein from Rhodobacter capsulatus (Rhodopseudomonas capsulata).